The chain runs to 383 residues: MAKSIKDHLQDALSNIGADNLRRFQSRLGDRKQEPRVRKSTIEKLKDEIDLVDLLVNTFTSDAVSVTVDILRGIKCNAVAEELLENTGQGGVSQPEPPVPEPIPKDPAQLKELKVTPCSQQFKNKILREKGQETYEIKDKSVRKRLALLINNVDFDDKAMKRSGSEKDEENMEKLLKELDYQVVKRPNLSAKEMDEAIRDFAQREEHKYSDSAFVVIMSHGKRDAIMGVHYHRTNNPSDSFPVDNVYRRLNSENCPALRDKPKVILIQACRGGEHGRVWASDGEPDEPIEIEDDDFVHKEKDFISLMSCTPDTKSYRHVQNGTFYVQTLVDVFIKCAHEDHIEELFRKVLRRFEHPNMIGNFKQMACKDRATLPKLFYLFPGL.

The propeptide occupies 1 to 142 (MAKSIKDHLQ…ETYEIKDKSV (142 aa)). One can recognise a Pyrin domain in the interval 8-81 (HLQDALSNIG…RGIKCNAVAE (74 aa)). A disordered region spans residues 87–106 (TGQGGVSQPEPPVPEPIPKD). Active-site residues include His220 and Cys270. The propeptide occupies 275–296 (HGRVWASDGEPDEPIEIEDDDF).

Belongs to the peptidase C14A family. As to quaternary structure, heterotetramer that consists of two anti-parallel arranged heterodimers, each one formed by a 20 kDa (p20) and a 10 kDa (p10) subunit. Interacts (via pyrin domain) with pycard (via pyrin domain). Interacts with caspb. Component of NLRP1 inflammasomes. Inflammasomes are supramolecular complexes that assemble in the cytosol in response to pathogens and other damage-associated signals and play critical roles in innate immunity and inflammation. The NLRP1 inflammasome is composed of the signal sensor nlrp1, and the adapter pycard (asc), which recruit effector pro-inflammatory caspases caspa and/or caspb. The interaction between nlrp1 and pycard is required for the sequential recruitment of caspa and then caspb. Caspa is preferentially recruited first and this causes the cleavage of pro-il1b into the midformed il1b. This is followed by the recruitment of caspb, which is activated and cleaves the midformed il1b resulting in il1b maturation. Interacts with caiap. In terms of processing, the two subunits are derived from the precursor sequence by an autocatalytic mechanism.

It localises to the inflammasome. Its subcellular location is the cytoplasm. It catalyses the reaction Strict requirement for an Asp residue at position P1 and has a preferred cleavage sequence of Tyr-Val-Ala-Asp-|-.. Functionally, thiol protease which cleaves IL-1 beta (il1b), releasing the mature cytokine which is involved in a variety of inflammatory processes, and mediates apoptosis. Component of the NLRP1 inflammasome, which plays a crucial role in innate immunity and inflammation. In response to pathogens and other damage-associated signals, recruited to the NLRP1 inflammasome in its precursor form. Its subsequent activation causes the cleavage of pro-il1b into the midformed il1b, which then evetually leads to il1b maturation and secretion in the extracellular milieu. Required for the development of the cartilaginous pharyngeal skeleton. The sequence is that of Caspase a from Danio rerio (Zebrafish).